A 202-amino-acid chain; its full sequence is Large ribosomal subunit protein eL13 (202 aa).

The segment at 183 to 202 is disordered; sequence GIREKRAKEKAEAEAEKAKK.

This sequence belongs to the eukaryotic ribosomal protein eL13 family. In terms of assembly, component of the large ribosomal subunit. Mature ribosomes consist of a small (40S) and a large (60S) subunit. The 40S subunit contains about 32 different proteins and 1 molecule of RNA (18S). The 60S subunit contains 45 different proteins and 3 molecules of RNA (25S, 5.8S and 5S).

It is found in the cytoplasm. In terms of biological role, component of the ribosome, a large ribonucleoprotein complex responsible for the synthesis of proteins in the cell. The small ribosomal subunit (SSU) binds messenger RNAs (mRNAs) and translates the encoded message by selecting cognate aminoacyl-transfer RNA (tRNA) molecules. The large subunit (LSU) contains the ribosomal catalytic site termed the peptidyl transferase center (PTC), which catalyzes the formation of peptide bonds, thereby polymerizing the amino acids delivered by tRNAs into a polypeptide chain. The nascent polypeptides leave the ribosome through a tunnel in the LSU and interact with protein factors that function in enzymatic processing, targeting, and the membrane insertion of nascent chains at the exit of the ribosomal tunnel. The protein is Large ribosomal subunit protein eL13 of Candida albicans (strain SC5314 / ATCC MYA-2876) (Yeast).